Reading from the N-terminus, the 239-residue chain is Ribonuclease 3 (239 aa).

The RNase III domain maps to 11–133; that stretch reads HTAIQKKLGY…MFAAVSFDAD (123 aa). Glu46 is a Mg(2+) binding site. The active site involves Asp50. 2 residues coordinate Mg(2+): Asp119 and Glu122. Glu122 is an active-site residue. One can recognise a DRBM domain in the interval 160–230; it reads DGKTALQEAL…AKEALKWLEE (71 aa).

This sequence belongs to the ribonuclease III family. In terms of assembly, homodimer. It depends on Mg(2+) as a cofactor.

It is found in the cytoplasm. The enzyme catalyses Endonucleolytic cleavage to 5'-phosphomonoester.. Functionally, digests double-stranded RNA. Involved in the processing of primary rRNA transcript to yield the immediate precursors to the large and small rRNAs (23S and 16S). Processes some mRNAs, and tRNAs when they are encoded in the rRNA operon. Processes pre-crRNA and tracrRNA of type II CRISPR loci if present in the organism. This is Ribonuclease 3 from Neisseria gonorrhoeae (strain ATCC 700825 / FA 1090).